The sequence spans 205 residues: Inactive ribonuclease-like protein 9 (205 aa).

The first 26 residues, 1–26, serve as a signal peptide directing secretion; sequence MMRTLITTHPLPLLLLPQQLLQLVQF. 2 cysteine pairs are disulfide-bonded: Cys116–Cys168 and Cys123–Cys130. Residues Asn131 and Asn143 are each glycosylated (N-linked (GlcNAc...) asparagine).

The protein belongs to the pancreatic ribonuclease family. In terms of tissue distribution, at the mRNA level, widely expressed. At protein level, restricted to epididymis. Expressed in spermatozoa (sperm head and neck), with higher levels on ejaculated and epididymal sperm than on testicular sperm (at protein level). Expressed in the epithelial cells of the epididymal tubule (at protein level). Not detected in muscle.

Its subcellular location is the secreted. Functionally, does not exhibit any ribonuclease activity. This Homo sapiens (Human) protein is Inactive ribonuclease-like protein 9 (RNASE9).